The sequence spans 377 residues: 5-hydroxytryptamine receptor 1D (377 aa).

Asn-5, Asn-17, and Asn-21 each carry an N-linked (GlcNAc...) asparagine glycan. 3 helical membrane-spanning segments follow: residues 39-64 (ISLA…TTIL), 76-97 (LIGS…ISIA), and 110-134 (LCDI…VIAL). Cys-111 and Cys-188 are joined by a disulfide. Positions 118 and 122 each coordinate serotonin. Residues 135–137 (DRY) carry the DRY motif; important for ligand-induced conformation changes motif. 4 helical membrane passes run 155–176 (AAAM…PLFW), 195–218 (ISYT…VLYG), 301–326 (KTLG…VLPI), and 336–359 (GLFD…YTVF). Ser-321 provides a ligand contact to serotonin. The NPxxY motif; important for ligand-induced conformation changes and signaling signature appears at 352–356 (NPIIY).

This sequence belongs to the G-protein coupled receptor 1 family. Homodimer. Heterodimer with HTR1B.

The protein localises to the cell membrane. Its function is as follows. G-protein coupled receptor for 5-hydroxytryptamine (serotonin). Also functions as a receptor for ergot alkaloid derivatives, various anxiolytic and antidepressant drugs and other psychoactive substances. Ligand binding causes a conformation change that triggers signaling via guanine nucleotide-binding proteins (G proteins) and modulates the activity of downstream effectors, such as adenylate cyclase. HTR1D is coupled to G(i)/G(o) G alpha proteins and mediates inhibitory neurotransmission by inhibiting adenylate cyclase activity. Regulates the release of 5-hydroxytryptamine in the brain, and thereby affects neural activity. May also play a role in regulating the release of other neurotransmitters. May play a role in vasoconstriction. In Oryctolagus cuniculus (Rabbit), this protein is 5-hydroxytryptamine receptor 1D (HTR1D).